The following is a 764-amino-acid chain: Chloride anion exchanger (764 aa).

At 1-76 (MIEPFGNQYI…YRLKEWLLSD (76 aa)) the chain is on the cytoplasmic side. Residues 77 to 97 (IVSGISTGIVAVLQGLAFALL) traverse the membrane as a helical segment. Over 98 to 99 (VD) the chain is Extracellular. A helical membrane pass occupies residues 100-120 (IPPVYGLYASFFPAIIYLFFG). Over 121–124 (TSRH) the chain is Cytoplasmic. The helical transmembrane segment at 125 to 145 (ISVGPFPILSMMVGLAVSGAV) threads the bilayer. Topologically, residues 146-175 (SKAVPDRNATTLGLPNNSNNSSLLDDERVR) are extracellular. 3 N-linked (GlcNAc...) asparagine glycosylation sites follow: asparagine 153, asparagine 161, and asparagine 165. Residues 176–196 (VAAAASVTVLSGIIQLAFGIL) form a helical membrane-spanning segment. A topological domain (cytoplasmic) is located at residue arginine 197. Residues 198–218 (IGFVVIYLSESLISGFTTAAA) form a helical membrane-spanning segment. Residues 219–257 (VHVLVSQLKFIFQLTVPSHTDPVSIFKVLYSVFSQIEKT) lie on the Extracellular side of the membrane. The helical transmembrane segment at 258–278 (NIADLVTALIVLLVVSIVKEI) threads the bilayer. Residues 279 to 342 (NQRFKDKLPV…VETFQNTVGD (64 aa)) lie on the Cytoplasmic side of the membrane. Residues 343 to 363 (CFGIAMVAFAVAFSVASVYSL) traverse the membrane as a helical segment. The Extracellular portion of the chain corresponds to 364 to 374 (KYDYPLDGNQE). A helical membrane pass occupies residues 375 to 395 (LIALGLGNIVCGVFRGFAGST). The Cytoplasmic segment spans residues 396–411 (ALSRSAVQESTGGKTQ). The helical transmembrane segment at 412–432 (IAGLIGAIIVLIVVLAIGFLL) threads the bilayer. At 433 to 469 (APLQKSVLAALALGNLKGMLMQFAEIGRLWRKDKYDC) the chain is on the extracellular side. The chain crosses the membrane as a helical span at residues 470-490 (LIWIMTFIFTIVLGLGLGLAA). Topologically, residues 491-701 (SVAFQLLTIV…EKLNRYEFFD (211 aa)) are cytoplasmic. One can recognise an STAS domain in the interval 525–720 (DYYDMYEPEG…LTIHDAVLHI (196 aa)). The PDZ-binding motif lies at 761-764 (ETKF).

It belongs to the SLC26A/SulP transporter (TC 2.A.53) family. In terms of assembly, interacts with CFTR, SLC26A6 and NHERF1. Interacts with PDZK1. Interacts (via PDZ-binding motif) with NHERF4 (via the third PDZ domain); interaction leads to decreased expression of SLC26A3 on the cell membrane resulting in its reduced exchanger activity. Post-translationally, N-glycosylation is required for efficient cell surface expression, and protection from proteolytic degradation. Expressed in the colon. Expression is significantly decreased in adenomas (polyps) and adenocarcinomas of the colon.

Its subcellular location is the apical cell membrane. It is found in the membrane. It localises to the cell membrane. It catalyses the reaction hydrogencarbonate(in) + 2 chloride(out) = hydrogencarbonate(out) + 2 chloride(in). Its activity is regulated as follows. Inhibited by acidic pH. Functionally, mediates chloride-bicarbonate exchange with a chloride bicarbonate stoichiometry of 2:1 in the intestinal epithelia. Plays a role in the chloride and bicarbonate homeostasis during sperm epididymal maturation and capacitation. This chain is Chloride anion exchanger (SLC26A3), found in Homo sapiens (Human).